The sequence spans 408 residues: Lipoate--protein ligase 1 (408 aa).

The N-terminal 18 residues, 1–18, are a transit peptide targeting the mitochondrion; it reads MKRIFRLVRRCHYSTEKR. The BPL/LPL catalytic domain maps to 60 to 242; that stretch reads KFNEPILFLW…EFTKFYEQNY (183 aa). Residues Arg-102, Gly-107, and Tyr-110 each contribute to the ATP site. Gly-107 provides a ligand contact to (R)-lipoate. Asp-153 contributes to the Mg(2+) binding site. Lys-160 contributes to the ATP binding site. Residue Lys-160 participates in (R)-lipoate binding.

It belongs to the LplA family.

Its subcellular location is the mitochondrion. It catalyses the reaction L-lysyl-[lipoyl-carrier protein] + (R)-lipoate + ATP = N(6)-[(R)-lipoyl]-L-lysyl-[lipoyl-carrier protein] + AMP + diphosphate + H(+). The enzyme catalyses (R)-dihydrolipoate + L-lysyl-[lipoyl-carrier protein] + ATP = N(6)-[(R)-dihydrolipoyl]-L-lysyl-[lipoyl-carrier protein] + AMP + diphosphate + H(+). It carries out the reaction (R)-dihydrolipoate + ATP + H(+) = N(6)-[(R)-dihydrolipoyl]-5'-AMP + diphosphate. The catalysed reaction is N(6)-[(R)-dihydrolipoyl]-5'-AMP + L-lysyl-[lipoyl-carrier protein] = N(6)-[(R)-dihydrolipoyl]-L-lysyl-[lipoyl-carrier protein] + AMP + 2 H(+). It functions in the pathway protein modification; protein lipoylation via exogenous pathway; protein N(6)-(lipoyl)lysine from lipoate: step 1/2. The protein operates within protein modification; protein lipoylation via exogenous pathway; protein N(6)-(lipoyl)lysine from lipoate: step 2/2. Its activity is regulated as follows. Inhibited by the lipoate analog 8-bromo-octanoate (BrO). Catalytic activity is increased in the presence of Mg(2+). Its function is as follows. Catalyzes both the ATP-dependent activation of exogenously supplied lipoate to lipoyl-AMP and the transfer of the activated lipoyl onto the lipoyl domains of lipoate-dependent enzymes. In the mitochondrion, functions as a redox switch between two lipoylation routes. Senses the oxidation state of lipoate and determines which downstream enzymes will be lipoylated. In low reducing conditions, uses lipoate in its oxidized ring form to lipoylate glycine cleavage system H-protein GCVH. In high reducing conditions and together with LipL2, uses reduced lipoate (dihydrolipoate) to lipoylate the E2 component of the branched chain alpha-ketoacid dehydrogenase complex BCKDH-E2/BCDH and the E2 component of the alpha-ketoglutarate dehydrogenase complex KDH. LipL1 is responsible for catalysing the activation of lipoate, forming lipoyl-AMP while LipL2 is required but is not capable of catalyzing this reaction. This Plasmodium falciparum (isolate 3D7) protein is Lipoate--protein ligase 1.